The following is a 2326-amino-acid chain: Telomere-associated protein RIF1 (2326 aa).

3 disordered regions span residues 381–410 (QGTPSRVPSNPNSANPPQKPGPYPFASPAT), 1105–1965 (YTQS…CITP), and 1993–2050 (VENK…DDSL). The span at 382-396 (GTPSRVPSNPNSANP) shows a compositional bias: polar residues. Composition is skewed to basic and acidic residues over residues 1112 to 1126 (SLEKSPLENAKEDFK) and 1150 to 1182 (CKVDNPLEDVKEKSAYHIEKNSNSEEESSRGDR). Low complexity predominate over residues 1216–1225 (SAISCSSTSS). Composition is skewed to polar residues over residues 1233–1242 (QPASRRQSFI) and 1252–1270 (SRPFSPSALNSVSEVSQSA). The span at 1290-1299 (KSGEESRKSS) shows a compositional bias: basic and acidic residues. 2 stretches are compositionally biased toward polar residues: residues 1318 to 1332 (MEQQGNQQAKLVTNS) and 1341 to 1353 (SFVSNSVENSPES). Residues 1376–1402 (PDIKKAEAVMAEIEKVRAFEMDSKENT) are compositionally biased toward basic and acidic residues. Positions 1403-1412 (PPKTAVSSEQ) are enriched in polar residues. Composition is skewed to basic and acidic residues over residues 1448–1480 (QDKEDGYQKKDKRKEDEKALQKKVPQTKEDASQ), 1489–1511 (ASEHAIKKESSLPERSAAEDLGS), and 1519–1539 (GADEEANRSAGKPEDTLKSDS). Residues 1564–1573 (SSQGLLSSIE) show a composition bias toward polar residues. Basic residues predominate over residues 1586–1595 (SLKKKSGKTK). Residues 1596 to 1609 (NKSDSLEGKRKDVQ) are compositionally biased toward basic and acidic residues. Polar residues-rich tracts occupy residues 1610-1640 (PESQSHGVSSQVDESKNLSGMNESELSSEVS) and 1671-1683 (RTSPSTQNVSVEQ). The span at 1697–1712 (RVSDEVLKGDENKCIE) shows a compositional bias: basic and acidic residues. Over residues 1713–1745 (KQSSVEQHSSVQPENVQGANTSGSDLSSLQMQD) the composition is skewed to polar residues. Basic and acidic residues predominate over residues 1776 to 1785 (SKSEDPRELI). Polar residues predominate over residues 1795–1813 (AVSTAEVSGSSNLEESLSI). Basic and acidic residues-rich tracts occupy residues 1869 to 1884 (VEIKVKEEVDGNDRAE), 1908 to 1925 (SEEKAAVEKEEESQHGEM), and 1932 to 1954 (DGSKPETKQMDELEGNRDGKEEA). Positions 2009–2036 (SFTSVNGSPSGVQARCTWSPSASPSTSI) are enriched in polar residues.

It belongs to the RIF1 family. Interacts with TP53BP1 (when phosphorylated by ATM).

It localises to the nucleus. The protein resides in the chromosome. It is found in the telomere. The protein localises to the cytoplasm. Its subcellular location is the cytoskeleton. It localises to the spindle. Key regulator of TP53BP1 that plays a key role in the repair of double-strand DNA breaks (DSBs) in response to DNA damage: acts by promoting non-homologous end joining (NHEJ)-mediated repair of DSBs. In response to DNA damage, interacts with ATM-phosphorylated TP53BP1, allowing recruitment to DNA DSBs. Once recruited to DSBs, RIF1 and TP53BP1 act by promoting NHEJ-mediated repair of DSBs. In the same time, RIF1 and TP53BP1 specifically counteract DSBs resection via homologous recombination (HR) during G1 phase. In Gallus gallus (Chicken), this protein is Telomere-associated protein RIF1.